The primary structure comprises 814 residues: Lon protease 1 (814 aa).

Basic and acidic residues predominate over residues 1-17; it reads MTDDRDKTNEDPEKIIE. Residues 1 to 28 form a disordered region; the sequence is MTDDRDKTNEDPEKIIEADFNPEDPDDA. One can recognise a Lon N-terminal domain in the interval 49–245; that stretch reads LPIIPLRPRP…KVLVLLKKEL (197 aa). Position 398 to 405 (398 to 405) interacts with ATP; that stretch reads GPPGVGKT. The region spanning 633–814 is the Lon proteolytic domain; sequence EDVPGVVTGL…YRDVYQVAFG (182 aa). Catalysis depends on residues serine 721 and lysine 764.

It belongs to the peptidase S16 family. Homohexamer. Organized in a ring with a central cavity.

It localises to the cytoplasm. It carries out the reaction Hydrolysis of proteins in presence of ATP.. In terms of biological role, ATP-dependent serine protease that mediates the selective degradation of mutant and abnormal proteins as well as certain short-lived regulatory proteins. Required for cellular homeostasis and for survival from DNA damage and developmental changes induced by stress. Degrades polypeptides processively to yield small peptide fragments that are 5 to 10 amino acids long. Binds to DNA in a double-stranded, site-specific manner. The chain is Lon protease 1 from Syntrophotalea carbinolica (strain DSM 2380 / NBRC 103641 / GraBd1) (Pelobacter carbinolicus).